Here is a 734-residue protein sequence, read N- to C-terminus: MPNNQQNQIESPSKNTSNVGGSTLLNNNSPPFKSNGNLNSIPNGFNFLSSTSFHGGFGSLFSPDYAFNEQASSITSNSNLNILNNDSFDKNFGQSFFNSFSSLGSFNQTQQQKEALLSFQNSYLQQQQKDQQQKEQQKEQQKEQQQQEEQEQQQKEQQPNESNTTTTTTTTTTAVEQQGAEQQDTNLNSTSSPTMMTDVVFNTNDHVDFASANNNVMVTSSPISSSLNNSQDNTKPVSPDNIENTSNPMDTSSSNGKTPTITPIVTPITTPVVTPSSTPLSTPLSTPLSTPLSTPVAPIFNSPTTSTSSTHSNTSTPITVSIINNNNNNNSNSNNNNNNNNNNNNNNTNNTTTTTTTATTTSGGKTNPTGKKTSLKQGWTKEEHIRFLNGIQIHGKGAWKEIAQFVGTRTPTQIQSHAQKYYLRQKQETKNKRSIHDLSLQDLIDDNLNNSNKNNVDKNKQDDKEKKTQKTKKTKSKSSTKGDEEMITQQQQLQQQPQQQPQQKQPPTIITNFNTTPTSSQSSPKSNSPSSPSSPQSFQSSQTEQVVGKLFSPFYRANDGDDSNVRHIPKSFLNNNNSNNNNSNINGINNNNGNGNGNMDMNSNNINSFGNNEGNILRHQNSHQIPPPPPPPIQHVQYQMDFQRQYLPHHTPQPPPPPPIQQMAPIFPIYNGSNIHDINGNNHNNNNNNNNNINNGWIQSPININSQMQPQIHQQFPQNFYQYNPYSAPPPTLQ.

3 disordered regions span residues 1–35 (MPNN…FKSN), 128–196 (QKDQ…PTMM), and 221–378 (SPIS…LKQG). The segment covering 131–142 (QQQKEQQKEQQK) has biased composition (basic and acidic residues). Residues 164–173 (TTTTTTTTTT) show a composition bias toward low complexity. Residues 174–196 (AVEQQGAEQQDTNLNSTSSPTMM) are compositionally biased toward polar residues. Positions 221 to 230 (SPISSSLNNS) are enriched in low complexity. Residues 231–257 (QDNTKPVSPDNIENTSNPMDTSSSNGK) are compositionally biased toward polar residues. A compositionally biased stretch (low complexity) spans 258 to 372 (TPTITPIVTP…GGKTNPTGKK (115 aa)). Residues 371–426 (KKTSLKQGWTKEEHIRFLNGIQIHGKGAWKEIAQFVGTRTPTQIQSHAQKYYLRQK) enclose the HTH myb-type domain. Positions 399 to 422 (WKEIAQFVGTRTPTQIQSHAQKYY) form a DNA-binding region, H-T-H motif. The span at 445–454 (DDNLNNSNKN) shows a compositional bias: low complexity. Positions 445–623 (DDNLNNSNKN…GNILRHQNSH (179 aa)) are disordered. Residues 455-468 (NVDKNKQDDKEKKT) show a composition bias toward basic and acidic residues. Positions 469-478 (QKTKKTKSKS) are enriched in basic residues. Composition is skewed to low complexity over residues 489 to 543 (QQQQ…SSQT) and 574 to 615 (NNNN…NEGN).

The protein localises to the nucleus. The chain is Myb-like protein J (mybJ) from Dictyostelium discoideum (Social amoeba).